The chain runs to 505 residues: 6-phosphofructo-2-kinase/fructose-2,6-bisphosphatase 2 (505 aa).

Positions 1–20 (MSGASSSEQNNNSYETKTPN) are disordered. Ser-2 carries the post-translational modification N-acetylserine. A 6-phosphofructo-2-kinase region spans residues 2 to 248 (SGASSSEQNN…VYYLMNIHVQ (247 aa)). Ser-29 carries the post-translational modification Phosphoserine; by PKA. 45 to 53 (GLPARGKTY) is a binding site for ATP. Beta-D-fructose 6-phosphate contacts are provided by Arg-78 and Arg-102. Residue Asp-128 is part of the active site. Residues Thr-130 and Arg-136 each contribute to the beta-D-fructose 6-phosphate site. Cys-158 is an active-site residue. ATP is bound at residue 167–172 (NILEVK). The beta-D-fructose 6-phosphate site is built by Lys-172, Arg-193, and Tyr-197. The tract at residues 249-505 (PRTIYLCRHG…RAQDMQEGAD (257 aa)) is fructose-2,6-bisphosphatase. Position 256 (Arg-256) interacts with beta-D-fructose 2,6-bisphosphate. The active-site Tele-phosphohistidine intermediate is the His-257. Residues Asn-263 and Gly-269 each contribute to the beta-D-fructose 2,6-bisphosphate site. The active-site Proton donor/acceptor is the Glu-326. Tyr-337, Arg-351, Lys-355, Tyr-366, Gln-392, and Arg-396 together coordinate beta-D-fructose 2,6-bisphosphate. 348–351 (FALR) lines the ATP pocket. ATP contacts are provided by residues 392-396 (QAVMR) and Tyr-428. Residues 445 to 505 (HRDKPTNNFP…RAQDMQEGAD (61 aa)) are disordered. The segment covering 450–476 (TNNFPKNQTPVRMRRNSFTPLSSSNTI) has biased composition (polar residues). Ser-466 carries the post-translational modification Phosphoserine; by AMPK. A phosphothreonine mark is found at Thr-468 and Thr-475. Ser-483 is modified (phosphoserine; by BRAF). Ser-486 and Ser-493 each carry phosphoserine.

It in the C-terminal section; belongs to the phosphoglycerate mutase family. Homodimer. Forms a heterodimer with PFKFB3. Post-translationally, phosphorylation by AMPK stimulates activity. In terms of tissue distribution, heart.

The catalysed reaction is beta-D-fructose 2,6-bisphosphate + H2O = beta-D-fructose 6-phosphate + phosphate. The enzyme catalyses beta-D-fructose 6-phosphate + ATP = beta-D-fructose 2,6-bisphosphate + ADP + H(+). With respect to regulation, phosphorylation results in the activation of the kinase activity. Synthesis and degradation of fructose 2,6-bisphosphate. The sequence is that of 6-phosphofructo-2-kinase/fructose-2,6-bisphosphatase 2 from Homo sapiens (Human).